The sequence spans 375 residues: DNA replication and repair protein RecF (375 aa).

An ATP-binding site is contributed by 30–37 (GLNGQGKT).

This sequence belongs to the RecF family.

It is found in the cytoplasm. Its function is as follows. The RecF protein is involved in DNA metabolism; it is required for DNA replication and normal SOS inducibility. RecF binds preferentially to single-stranded, linear DNA. It also seems to bind ATP. This chain is DNA replication and repair protein RecF, found in Halothermothrix orenii (strain H 168 / OCM 544 / DSM 9562).